A 625-amino-acid polypeptide reads, in one-letter code: MEKKQFQAESKRLLEMMVNSIYSQKEIFLRELISNASDAIDKMYYRSLTDDSLSFEKDRYAIYVEADKDNRKLVMKDTGIGMTKEELEANLGTIAKSGSLAFKKETEIEDGHDIIGQFGVGFYAAFMVADKVTVITRSIDSDQAYKWESDGTDGYTIEPAEKEDVGTVITLHIKENTDDESYDEYLEEYRIKAIIKKYSDFIRYPIKMNVTVSKPKEDNEDEYAEYQEEQTINSMVPIWRKNKSELKDSDYEQFYQDKRYGFDKPLEHIHVSVDGAIRYNAILFIPEHTPFDYYSKEYEKGLELYANGVLIMEKCAELLPDYFSFVKGMVDSEDLSLNISREMLQHDRQLKLIAKNIKSKIKSQLKTMLKKEPDKYEKFYKAFGRQLKFGVYNDFGANKDDLQDLLLFYSSTEKKLVSLSDYVSRMKEGQTYIYYATGESNERIAKLPQTEMVADQGYEILYFTEDVDEFAIKMLRSYDEKEFMSVSSADLDIETDEKQEEETNSEENKKLFEKMKSILDGKVKDVRTSKRLKSHPVFLAADGEITLEMEKVLQAMPDNQNVKAEKVLEINPNHDVFHSLKQAYEEDEDKLKLYTNLLYNQALLIEGLPLEDPVEFSQNMCKVMV.

The a; substrate-binding stretch occupies residues 1 to 341 (MEKKQFQAES…SEDLSLNISR (341 aa)). Residues 342–551 (EMLQHDRQLK…DGEITLEMEK (210 aa)) are b. Positions 552–625 (VLQAMPDNQN…FSQNMCKVMV (74 aa)) are c.

It belongs to the heat shock protein 90 family. Homodimer.

The protein resides in the cytoplasm. In terms of biological role, molecular chaperone. Has ATPase activity. The chain is Chaperone protein HtpG from Shouchella clausii (strain KSM-K16) (Alkalihalobacillus clausii).